We begin with the raw amino-acid sequence, 76 residues long: Kappa-actitoxin-Avd4e (76 aa).

The signal sequence occupies residues 1–19 (MNKALFLCLVVLCAAVVFA). The propeptide occupies 20–31 (AEDLQKAKHAPF). 3 disulfide bridges follow: cysteine 37–cysteine 72, cysteine 39–cysteine 65, and cysteine 55–cysteine 73. Residues 45–47 (RGD) carry the Cell attachment site motif.

Belongs to the sea anemone type 3 (BDS) potassium channel toxin family. In terms of tissue distribution, moderately expressed in the ectodermal tissue from the distal and proximal tentacles, body wall, and oral disk.

The protein resides in the secreted. The protein localises to the nematocyst. Functionally, is member of a fraction that shows antiangiogenic activity, since it inhibits human microvascular endothelial cells (HMEC) tubulogenesis. This protein could be a kunitz-type inhibitor with a RGD motif that could block angiogenesis in binding on integrins. Blocks Kv3 voltage-gated potassium channels. Reduces blood pressure. In Anemonia viridis (Snakelocks anemone), this protein is Kappa-actitoxin-Avd4e.